The chain runs to 402 residues: Proline-rich protein 25 (402 aa).

Disordered stretches follow at residues 1–29 (MARTDQKPPCRGGCWGQPGHPNTGGAAAH), 109–255 (TVPG…MVGS), and 337–371 (EAAQDPATRRTAPPRRTASPEPPAPGAPLPACPGR). Residues 345-355 (RRTAPPRRTAS) are compositionally biased toward low complexity. Residues 356 to 367 (PEPPAPGAPLPA) are compositionally biased toward pro residues.

In Homo sapiens (Human), this protein is Proline-rich protein 25 (PRR25).